A 105-amino-acid chain; its full sequence is UPF0122 protein OB1530 (105 aa).

It belongs to the UPF0122 family.

Might take part in the signal recognition particle (SRP) pathway. This is inferred from the conservation of its genetic proximity to ftsY/ffh. May be a regulatory protein. This is UPF0122 protein OB1530 from Oceanobacillus iheyensis (strain DSM 14371 / CIP 107618 / JCM 11309 / KCTC 3954 / HTE831).